We begin with the raw amino-acid sequence, 465 residues long: Glutamate--tRNA ligase (465 aa).

Residues 8–18 (PSPTGHLHIGG) carry the 'HIGH' region motif. Zn(2+)-binding residues include cysteine 97, cysteine 99, cysteine 124, and glutamate 126. Residues 234–238 (RLSKR) carry the 'KMSKS' region motif. Lysine 237 contributes to the ATP binding site.

It belongs to the class-I aminoacyl-tRNA synthetase family. Glutamate--tRNA ligase type 1 subfamily. As to quaternary structure, monomer. The cofactor is Zn(2+).

It localises to the cytoplasm. It catalyses the reaction tRNA(Glu) + L-glutamate + ATP = L-glutamyl-tRNA(Glu) + AMP + diphosphate. Its function is as follows. Catalyzes the attachment of glutamate to tRNA(Glu) in a two-step reaction: glutamate is first activated by ATP to form Glu-AMP and then transferred to the acceptor end of tRNA(Glu). The polypeptide is Glutamate--tRNA ligase (Thermodesulfovibrio yellowstonii (strain ATCC 51303 / DSM 11347 / YP87)).